The sequence spans 393 residues: Metal tolerance protein C2 (393 aa).

The disordered stretch occupies residues 1–23 (MERSISFNPRGDNELPDDRSSDV). The Cytoplasmic segment spans residues 1–113 (MERSISFNPR…VTSGNRQMKR (113 aa)). Over residues 11–21 (GDNELPDDRSS) the composition is skewed to basic and acidic residues. A helical membrane pass occupies residues 114–134 (LFLLIALNVLYSTTELSIGIF). Topologically, residues 135–139 (TGRVG) are vacuolar. A helical transmembrane segment spans residues 140–160 (LVSDAFHLTFGCGLLTFSLFA). Residues 161–186 (MATSRKKPDHAYSYGYKRLEVLSAFT) are Cytoplasmic-facing. Residues 187–207 (NALFLMFMSFSLAVEALHAFI) form a helical membrane-spanning segment. Residues 208-214 (QDESEHK) lie on the Vacuolar side of the membrane. A helical membrane pass occupies residues 215–235 (HYLIVSAVTNLLVNLLGVWFF). Residues 236 to 259 (RNYARVNIAYRKAEDMNYHSVCLH) lie on the Cytoplasmic side of the membrane. The helical transmembrane segment at 260–280 (VISDSIRSAGLILASWLLSLG) threads the bilayer. Residues 281-283 (VEN) lie on the Vacuolar side of the membrane. A helical transmembrane segment spans residues 284-304 (AEVLCLGLVSVTVFMLVMPLF). The Cytoplasmic segment spans residues 305–393 (KATGGVLLQM…QDLTLQTDYT (89 aa)).

Belongs to the cation diffusion facilitator (CDF) transporter (TC 2.A.4) family.

The protein localises to the vacuole membrane. Involved in sequestration of excess metal in the cytoplasm into vacuoles to maintain metal homeostasis. The protein is Metal tolerance protein C2 (MTPC2) of Arabidopsis thaliana (Mouse-ear cress).